The following is a 240-amino-acid chain: Mannose-binding protein C (240 aa).

A signal peptide spans 1–18 (MSLFPSLHLLLLIVMTAS). 2 consecutive Collagen-like domains span residues 39 to 61 (SPGINGLPGKDGLDGAKGEKGEP) and 67 to 97 (GLQGLPGMVGPQGSPGIPGLPGLKGQKGDSG). Pro46 is modified (hydroxyproline). The segment at 48-102 (KDGLDGAKGEKGEPGQGLIGLQGLPGMVGPQGSPGIPGLPGLKGQKGDSGIDPGN) is disordered. The span at 49–60 (DGLDGAKGEKGE) shows a compositional bias: basic and acidic residues. Hydroxyproline occurs at positions 72, 81, and 87. The stretch at 104–122 (LANLRSELDNIKKWLIFAQ) forms a coiled coil. In terms of domain architecture, C-type lectin spans 126–237 (VGKKLYLTNG…CSSQLSAVCE (112 aa)). Cystine bridges form between Cys147-Cys236 and Cys214-Cys228.

In terms of assembly, interacts with MASP1 and MASP2. Interacts with MEP1A and MEP1B and may inhibit their catalytic activity. Forms oligomeric complexes of 2 or 3 homotrimers. In terms of tissue distribution, expressed in liver. Weakly expressed in kidney and testis.

The protein resides in the secreted. Calcium-dependent lectin involved in innate immune defense. Binds mannose, fucose and N-acetylglucosamine on different microorganisms and activates the lectin complement pathway. Binds to late apoptotic cells, as well as to apoptotic blebs and to necrotic cells, but not to early apoptotic cells, facilitating their uptake by macrophages. According to some authors, it only binds mannose. The polypeptide is Mannose-binding protein C (Sus scrofa (Pig)).